The primary structure comprises 203 residues: MSRYTGPRLKIIRRFGGLDLPGLTRKRPKNTNPPGMHGAERKKKSEYAIRLEEKQKVRLNYGVSERQMLRYMRKARRSKGSTGLALLQMLEMRLDCIVFRLGMAPTIPAARQLVSHGHIEVNGRKVTIPSYGCKVGDVITVRNKESSRKLVAAYAEYPGLFLPDYLEFDKEKLRGRIKELPPREQICAPVNELLVVEFYSRKL.

The disordered stretch occupies residues 20 to 45; it reads LPGLTRKRPKNTNPPGMHGAERKKKS. Positions 92–155 constitute an S4 RNA-binding domain; that stretch reads MRLDCIVFRL…SSRKLVAAYA (64 aa).

It belongs to the universal ribosomal protein uS4 family. As to quaternary structure, part of the 30S ribosomal subunit. Contacts protein S5. The interaction surface between S4 and S5 is involved in control of translational fidelity.

Functionally, one of the primary rRNA binding proteins, it binds directly to 16S rRNA where it nucleates assembly of the body of the 30S subunit. Its function is as follows. With S5 and S12 plays an important role in translational accuracy. The chain is Small ribosomal subunit protein uS4 from Synechococcus sp. (strain JA-3-3Ab) (Cyanobacteria bacterium Yellowstone A-Prime).